The chain runs to 430 residues: MAVKQKQVFVNDRPHLNIGTIGHVDHGKTTLTAAITKFCSEEGGGYEADFRAYDNIDKAPEERQRGITISTAHVEYKTPERHYAHVDCPGHADYIKNMITGAAQMDGAILVVAGTDGAMQQTKEHILLAKQVGVGSIVVYINKCDSSELDEELLELVESDIKDLLISHGFDLPEDEEDGSNPAIIRGSALLALNGEESELGKGSIRKLLAACDKYIALPERAVDGDFLMSIEDVFSISGRGTVVTGKIERGCIKVGDGVEIVGIRDTQKTTCTGVEMFNKLVEQGEAGFNVGILLRGSKREDVCRGQVLCKPGSITPHRKLRARIVTLTKEEGGRRTGFVSGYKPQFYFRTTDVTGTAYLPVDGAEIVMPGDDLEIFVELLNPIAMEKGSRFAIREGGVTVGAGQVLEIMDSKTDAEIAKMFKIVRAVKN.

A tr-type G domain is found at 13–220 (RPHLNIGTIG…ACDKYIALPE (208 aa)). The tract at residues 22–29 (GHVDHGKT) is G1. GTP is bound at residue 22–29 (GHVDHGKT). Threonine 29 serves as a coordination point for Mg(2+). The G2 stretch occupies residues 66 to 70 (GITIS). The segment at 87–90 (DCPG) is G3. Residues 87–91 (DCPGH) and 142–145 (NKCD) contribute to the GTP site. The segment at 142–145 (NKCD) is G4. Positions 188-190 (SAL) are G5.

Belongs to the TRAFAC class translation factor GTPase superfamily. Classic translation factor GTPase family. EF-Tu/EF-1A subfamily. As to quaternary structure, monomer.

The protein localises to the cytoplasm. The catalysed reaction is GTP + H2O = GDP + phosphate + H(+). Functionally, GTP hydrolase that promotes the GTP-dependent binding of aminoacyl-tRNA to the A-site of ribosomes during protein biosynthesis. This Neorickettsia sennetsu (strain ATCC VR-367 / Miyayama) (Ehrlichia sennetsu) protein is Elongation factor Tu.